The sequence spans 495 residues: Glutamate--tRNA ligase (495 aa).

The 'HIGH' region signature appears at 13–23 (PSPTGTPHVGL). Residues 257-261 (KLSKR) carry the 'KMSKS' region motif. Position 260 (Lys260) interacts with ATP.

It belongs to the class-I aminoacyl-tRNA synthetase family. Glutamate--tRNA ligase type 1 subfamily. Monomer.

It is found in the cytoplasm. The catalysed reaction is tRNA(Glu) + L-glutamate + ATP = L-glutamyl-tRNA(Glu) + AMP + diphosphate. Its function is as follows. Catalyzes the attachment of glutamate to tRNA(Glu) in a two-step reaction: glutamate is first activated by ATP to form Glu-AMP and then transferred to the acceptor end of tRNA(Glu). The chain is Glutamate--tRNA ligase from Mycolicibacterium vanbaalenii (strain DSM 7251 / JCM 13017 / BCRC 16820 / KCTC 9966 / NRRL B-24157 / PYR-1) (Mycobacterium vanbaalenii).